Here is a 216-residue protein sequence, read N- to C-terminus: Thymidylate kinase (216 aa).

Residue 9 to 16 participates in ATP binding; the sequence is GIEGSGKT.

This sequence belongs to the thymidylate kinase family.

It carries out the reaction dTMP + ATP = dTDP + ADP. Phosphorylation of dTMP to form dTDP in both de novo and salvage pathways of dTTP synthesis. In Syntrophotalea carbinolica (strain DSM 2380 / NBRC 103641 / GraBd1) (Pelobacter carbinolicus), this protein is Thymidylate kinase.